The following is a 317-amino-acid chain: Acetyl-coenzyme A carboxylase carboxyl transferase subunit alpha (317 aa).

The CoA carboxyltransferase C-terminal domain occupies 39-293; the sequence is RLQKKSNDLT…KAVLEKQLHE (255 aa).

Belongs to the AccA family. As to quaternary structure, acetyl-CoA carboxylase is a heterohexamer composed of biotin carboxyl carrier protein (AccB), biotin carboxylase (AccC) and two subunits each of ACCase subunit alpha (AccA) and ACCase subunit beta (AccD).

It localises to the cytoplasm. The enzyme catalyses N(6)-carboxybiotinyl-L-lysyl-[protein] + acetyl-CoA = N(6)-biotinyl-L-lysyl-[protein] + malonyl-CoA. The protein operates within lipid metabolism; malonyl-CoA biosynthesis; malonyl-CoA from acetyl-CoA: step 1/1. Component of the acetyl coenzyme A carboxylase (ACC) complex. First, biotin carboxylase catalyzes the carboxylation of biotin on its carrier protein (BCCP) and then the CO(2) group is transferred by the carboxyltransferase to acetyl-CoA to form malonyl-CoA. The polypeptide is Acetyl-coenzyme A carboxylase carboxyl transferase subunit alpha (Neisseria gonorrhoeae (strain NCCP11945)).